The sequence spans 505 residues: L-carnitine/gamma-butyrobetaine antiporter (505 aa).

12 consecutive transmembrane segments (helical) span residues 10 to 30 (IEPK…WLTV), 51 to 71 (WGWA…WLVF), 92 to 112 (IFMM…SIEI), 143 to 163 (GPLP…FFFV), 195 to 215 (FYLV…TPLV), 231 to 251 (LDAI…ACGL), 263 to 283 (SYLS…SFIM), 316 to 336 (WTVF…IFLA), 347 to 367 (LCFG…TVLG), 403 to 423 (LSTA…VTLI), 446 to 466 (LLVR…LLAL), and 475 to 495 (AIIA…LSFI).

It belongs to the BCCT transporter (TC 2.A.15) family. CaiT subfamily. Homotrimer.

It localises to the cell inner membrane. The enzyme catalyses 4-(trimethylamino)butanoate(in) + (R)-carnitine(out) = 4-(trimethylamino)butanoate(out) + (R)-carnitine(in). It participates in amine and polyamine metabolism; carnitine metabolism. In terms of biological role, catalyzes the exchange of L-carnitine for gamma-butyrobetaine. The polypeptide is L-carnitine/gamma-butyrobetaine antiporter (Salmonella choleraesuis (strain SC-B67)).